Consider the following 159-residue polypeptide: Ribosomal RNA large subunit methyltransferase H (159 aa).

S-adenosyl-L-methionine contacts are provided by residues L76, G108, and 127-132; that span reads FSRMTF.

This sequence belongs to the RNA methyltransferase RlmH family. Homodimer.

It localises to the cytoplasm. The enzyme catalyses pseudouridine(1915) in 23S rRNA + S-adenosyl-L-methionine = N(3)-methylpseudouridine(1915) in 23S rRNA + S-adenosyl-L-homocysteine + H(+). Its function is as follows. Specifically methylates the pseudouridine at position 1915 (m3Psi1915) in 23S rRNA. The sequence is that of Ribosomal RNA large subunit methyltransferase H from Bacillus pumilus (strain SAFR-032).